Reading from the N-terminus, the 342-residue chain is tRNA(Ile)-lysidine synthase (342 aa).

Serine 31 to serine 36 provides a ligand contact to ATP.

Belongs to the tRNA(Ile)-lysidine synthase family.

It localises to the cytoplasm. It catalyses the reaction cytidine(34) in tRNA(Ile2) + L-lysine + ATP = lysidine(34) in tRNA(Ile2) + AMP + diphosphate + H(+). Its function is as follows. Ligates lysine onto the cytidine present at position 34 of the AUA codon-specific tRNA(Ile) that contains the anticodon CAU, in an ATP-dependent manner. Cytidine is converted to lysidine, thus changing the amino acid specificity of the tRNA from methionine to isoleucine. This Nostoc sp. (strain PCC 7120 / SAG 25.82 / UTEX 2576) protein is tRNA(Ile)-lysidine synthase.